The primary structure comprises 473 residues: Photosystem II CP43 reaction center protein (473 aa).

Residues 1–14 (MKTLYSLRRFYPVE) constitute a propeptide that is removed on maturation. The residue at position 15 (T15) is an N-acetylthreonine. Phosphothreonine is present on T15. The next 5 membrane-spanning stretches (helical) occupy residues 69–93 (LFEVAHFVPEKPMYEQGLILLPHLA), 134–155 (LLGPETLEESFPFFGYVWKDRN), 178–200 (KALYFGGVYDTWAPGGGDVRKIT), 255–275 (KPFAWARRALVWSGEAYLSYS), and 291–312 (WFNNTAYPSEFYGPTGPEASQA). E367 lines the [CaMn4O5] cluster pocket. A helical transmembrane segment spans residues 447 to 471 (RARAAAAGFEKGIDRDFEPVLFMTP).

It belongs to the PsbB/PsbC family. PsbC subfamily. As to quaternary structure, PSII is composed of 1 copy each of membrane proteins PsbA, PsbB, PsbC, PsbD, PsbE, PsbF, PsbH, PsbI, PsbJ, PsbK, PsbL, PsbM, PsbT, PsbX, PsbY, PsbZ, Psb30/Ycf12, at least 3 peripheral proteins of the oxygen-evolving complex and a large number of cofactors. It forms dimeric complexes. Binds multiple chlorophylls and provides some of the ligands for the Ca-4Mn-5O cluster of the oxygen-evolving complex. It may also provide a ligand for a Cl- that is required for oxygen evolution. PSII binds additional chlorophylls, carotenoids and specific lipids. serves as cofactor.

The protein resides in the plastid. It is found in the chloroplast thylakoid membrane. One of the components of the core complex of photosystem II (PSII). It binds chlorophyll and helps catalyze the primary light-induced photochemical processes of PSII. PSII is a light-driven water:plastoquinone oxidoreductase, using light energy to abstract electrons from H(2)O, generating O(2) and a proton gradient subsequently used for ATP formation. The chain is Photosystem II CP43 reaction center protein from Cucumis sativus (Cucumber).